A 205-amino-acid polypeptide reads, in one-letter code: Nascent polypeptide-associated complex subunit alpha-like protein (205 aa).

Disordered regions lie at residues 1 to 73 (MPSV…RKAM) and 137 to 166 (KAPN…DTGV). Residues 20-29 (EQQELEHSDE) show a composition bias toward basic and acidic residues. Residues 30 to 51 (PILEDDEDDDDEEDDNDEDDAQ) are compositionally biased toward acidic residues. A compositionally biased stretch (basic and acidic residues) spans 56 to 66 (GEGKSKQSRSE). In terms of domain architecture, NAC-A/B spans 63–128 (SRSEKKCRKA…AKIEDLSSQL (66 aa)). Over residues 155–165 (QEDEDEVDDTG) the composition is skewed to acidic residues. Residues 166-203 (VEPKDIELVMTQAGVSRTKAVKALKAADGDIVSAIMDL) form the UBA domain.

Belongs to the NAC-alpha family.

In terms of biological role, may promote appropriate targeting of ribosome-nascent polypeptide complexes. This is Nascent polypeptide-associated complex subunit alpha-like protein from Pinus taeda (Loblolly pine).